The primary structure comprises 237 residues: ADTIVAVELDTYPNTDIGDPSYPHIGIDIKSVRSKKTAKWNMQNGKVGTAHIIYNSVGKRLSAVVSYPNGDSATVSYDVDLDNVLPEWVRVGLSASTGLYKETNTILSWSFTSKLKSNSTHETNALHFVFNQFSKDQKDLILQGDATTGTDGNLELTRVSSNGSPQGSSVGRALFYAPVHIWESSAVVASFDATFTFLIKSPDSHPADGIAFFISNIDSSIPSGSTGRLLGLFPDAN.

Positions 8 and 10 each coordinate Mn(2+). The Ca(2+) site is built by Asp10, Tyr12, Asn14, and Asp19. A carbohydrate is bound at residue Asn14. Asp19 and His24 together coordinate Mn(2+). Residues Gly70, 98–100, Asp208, and Arg228 each bind a carbohydrate; that span reads GLY.

The protein belongs to the leguminous lectin family. In terms of assembly, homotetramer. In terms of processing, concanavalin A-like lectins of the Diocleinae subtribe undergo proteolytic processing referred to as circular permutation. The propeptide is split into an N-terminal and a C-terminal part, the gamma and beta chain, respectively. These are then religated in beta-gamma order to form the mature alpha chain. The beta and gamma chains can often be detected in cell extracts. Residues 1-118 of the mature chain, as displayed here, probably constitute the beta chain in the propeptide, residues 119-237 the gamma chain.

In terms of biological role, D-mannose/D-glucose-binding lectin which binds alpha-methyl-D-mannoside, D-mannose and D-glucose in that order. Also binds to serum fetuin and ovalbumin. Has hemagglutinating activity towards rabbit erythrocytes. Is not toxic towards larvae of the brine shrimp Artemia. Induces relaxation in rat endothelized aorta. Shows a transient edematogenic effect in rat. This Canavalia cathartica (Jackbean) protein is Concanavalin V.